Consider the following 928-residue polypeptide: DNA-binding protein RFX6 (928 aa).

Disordered regions lie at residues 1-20 (MAKV…APQL) and 50-98 (EGQP…SKTK). The RFX-type winged-helix DNA-binding region spans 124 to 199 (TLQWLEENYI…YHYYGIGIKE (76 aa)).

This sequence belongs to the RFX family. Interacts with RFX3. In terms of tissue distribution, expressed in pancreas. Expressed in pancreatic beta-cells (insulin-positive cells) and alpha-cells (glucagon-positive cells) (at protein level). Specifically expressed in pancreas, small intestine and colon. Expressed in endocrine cells in the islets.

It is found in the nucleus. Functionally, transcription factor required to direct islet cell differentiation during endocrine pancreas development. Specifically required for the differentiation of 4 of the 5 islet cell types and for the production of insulin. Not required for pancreatic PP (polypeptide-producing) cells differentiation. Acts downstream of NEUROG3 and regulates the transcription factors involved in beta-cell maturation and function, thereby restricting the expression of the beta-cell differentiation and specification genes, and thus the beta-cell fate choice. Activates transcription by forming a heterodimer with RFX3 and binding to the X-box in the promoter of target genes. Involved in glucose-stimulated insulin secretion by promoting insulin and L-type calcium channel gene transcription. The chain is DNA-binding protein RFX6 (RFX6) from Homo sapiens (Human).